The sequence spans 1465 residues: DNA polymerase III PolC-type (1465 aa).

An Exonuclease domain is found at 427-583 (YVVFDVETTG…YDAEATGRLL (157 aa)).

Belongs to the DNA polymerase type-C family. PolC subfamily.

The protein localises to the cytoplasm. The catalysed reaction is DNA(n) + a 2'-deoxyribonucleoside 5'-triphosphate = DNA(n+1) + diphosphate. Functionally, required for replicative DNA synthesis. This DNA polymerase also exhibits 3' to 5' exonuclease activity. The chain is DNA polymerase III PolC-type from Streptococcus pyogenes serotype M6 (strain ATCC BAA-946 / MGAS10394).